The chain runs to 447 residues: Tubulin beta-2 chain (447 aa).

Residues glutamine 9, glutamate 67, serine 136, glycine 140, threonine 141, glycine 142, asparagine 202, and asparagine 224 each coordinate GTP. Glutamate 67 is a Mg(2+) binding site. Over residues 411-425 (SNMNDLVSEYQQYQD) the composition is skewed to polar residues. A disordered region spans residues 411-447 (SNMNDLVSEYQQYQDATAEEDEYEEEEEDYHQEHDEM). A compositionally biased stretch (acidic residues) spans 427-440 (TAEEDEYEEEEEDY).

Belongs to the tubulin family. In terms of assembly, dimer of alpha and beta chains. A typical microtubule is a hollow water-filled tube with an outer diameter of 25 nm and an inner diameter of 15 nM. Alpha-beta heterodimers associate head-to-tail to form protofilaments running lengthwise along the microtubule wall with the beta-tubulin subunit facing the microtubule plus end conferring a structural polarity. Microtubules usually have 13 protofilaments but different protofilament numbers can be found in some organisms and specialized cells. Requires Mg(2+) as cofactor.

The protein resides in the cytoplasm. It localises to the cytoskeleton. Functionally, tubulin is the major constituent of microtubules, a cylinder consisting of laterally associated linear protofilaments composed of alpha- and beta-tubulin heterodimers. Microtubules grow by the addition of GTP-tubulin dimers to the microtubule end, where a stabilizing cap forms. Below the cap, tubulin dimers are in GDP-bound state, owing to GTPase activity of alpha-tubulin. The protein is Tubulin beta-2 chain (TUBB2) of Pisum sativum (Garden pea).